Consider the following 113-residue polypeptide: Na(+)/H(+) antiporter subunit C (113 aa).

3 helical membrane passes run 4–21 (LMAV…YLLL), 28–47 (VIIG…LTMG), and 67–89 (PLPQ…FILV).

The protein belongs to the CPA3 antiporters (TC 2.A.63) subunit C family. As to quaternary structure, forms a heterooligomeric complex that consists of seven subunits: MrpA, MrpB, MrpC, MrpD, MrpE, MrpF and MrpG.

It localises to the cell membrane. Its function is as follows. Mrp complex is a Na(+)/H(+) antiporter that is considered to be the major Na(+) excretion system in B.subtilis. Has a major role in Na(+) resistance and a minor role in Na(+)- and K(+)-dependent pH homeostasis as compared to TetB. MrpA may be the actual Na(+)/H(+) antiporter, although the six other Mrp proteins are all required for Na(+)/H(+) antiport activity and Na(+) resistance. MrpA is required for initiation of sporulation when external Na(+) concentration increases. Also transports Li(+) but not K(+), Ca(2+) or Mg(2+). This Bacillus subtilis (strain 168) protein is Na(+)/H(+) antiporter subunit C (mrpC).